Consider the following 479-residue polypeptide: Dihydrolipoyl dehydrogenase (479 aa).

FAD-binding positions include 41-50 (EKRGALGGTC), Lys59, Ala124, and 153-155 (TGS). The cysteines at positions 50 and 55 are disulfide-linked. NAD(+) contacts are provided by residues 190 to 197 (GGGVIGLE), Glu213, Ile247, and Gly284. Residues Asp325 and 332–335 (MLAH) contribute to the FAD site. His458 (proton acceptor) is an active-site residue.

It belongs to the class-I pyridine nucleotide-disulfide oxidoreductase family. Homodimer. FAD serves as cofactor.

The enzyme catalyses N(6)-[(R)-dihydrolipoyl]-L-lysyl-[protein] + NAD(+) = N(6)-[(R)-lipoyl]-L-lysyl-[protein] + NADH + H(+). The protein is Dihydrolipoyl dehydrogenase of Trypanosoma brucei brucei.